We begin with the raw amino-acid sequence, 323 residues long: Beta-ketoacyl-[acyl-carrier-protein] synthase III (323 aa).

Residues Cys-113 and His-250 contribute to the active site. Residues 251–255 (QANLR) form an ACP-binding region. Residue Asn-280 is part of the active site.

It belongs to the thiolase-like superfamily. FabH family. Homodimer.

It localises to the cytoplasm. The enzyme catalyses malonyl-[ACP] + acetyl-CoA + H(+) = 3-oxobutanoyl-[ACP] + CO2 + CoA. The protein operates within lipid metabolism; fatty acid biosynthesis. Its function is as follows. Catalyzes the condensation reaction of fatty acid synthesis by the addition to an acyl acceptor of two carbons from malonyl-ACP. Catalyzes the first condensation reaction which initiates fatty acid synthesis and may therefore play a role in governing the total rate of fatty acid production. Possesses both acetoacetyl-ACP synthase and acetyl transacylase activities. Its substrate specificity determines the biosynthesis of branched-chain and/or straight-chain of fatty acids. The chain is Beta-ketoacyl-[acyl-carrier-protein] synthase III from Paracoccus denitrificans (strain Pd 1222).